The primary structure comprises 223 residues: Adenylate kinase 4, mitochondrial (223 aa).

15 to 20 (GSGKGT) lines the a ribonucleoside 5'-triphosphate pocket. Residues 35–64 (SSGHLLRENLKTGTEVGDVAKQYLEKGLLV) form an NMP region. AMP is bound by residues S36 and R41. K60 is modified (N6-succinyllysine). AMP contacts are provided by residues 62–64 (LLV), 89–92 (GFPR), and Q96. The interval 125–162 (RRWIHPSSGRVYNLDFNPPQVQGIDDITGEPLVQQEDD) is LID. A ribonucleoside 5'-triphosphate contacts are provided by residues R126 and 135-136 (VY). AMP is bound at residue R170. K175 carries the post-translational modification N6-acetyllysine. N6-acetyllysine; alternate occurs at positions 179 and 186. An N6-succinyllysine; alternate mark is found at K179 and K186. Residue T199 participates in a ribonucleoside 5'-triphosphate binding.

Belongs to the adenylate kinase family. AK3 subfamily. Monomer. Interacts with SLC25A5/ANT2. As to expression, expressed in kidney, liver, stomach, brain, spinal cord, heart, ovary, oviduct, colon, jejunum, ileum and testis (at protein level). In the brain, expressed in the pyramidal cells of the cerebrum and glial cells in the cerebellum (at protein level). In the heart, expressed by myocytes (at protein level). In the kidney, expressed in the proximal to distal tubule in the cortex and the outer and inner zones of the medulla (at protein level). In the stomach, expressed in stratified squamous epithelia in the forestomach and in the gastric pit and mucus producing cells of the glandular stomach (at protein level). Expressed in epithelial cells of the jejunum, ileum, and colon (at protein level). In the testis, expressed by spermatocytes (at protein level). In the ovaries, expressed by oocytes, follicular epithelial cells, and corpus luteum cells (at protein level). In the oviduct, expressed in the epithelia of the isthmus and the ciliated cells of the ampulla (at protein level). Expressed in the pyramidal cells in the hippocampus.

The protein resides in the mitochondrion matrix. It catalyses the reaction a ribonucleoside 5'-phosphate + ATP = a ribonucleoside 5'-diphosphate + ADP. The enzyme catalyses AMP + ATP = 2 ADP. The catalysed reaction is GTP + AMP = GDP + ADP. It carries out the reaction CMP + ATP = CDP + ADP. It catalyses the reaction GTP + CMP = CDP + GDP. The enzyme catalyses dAMP + ATP = dADP + ADP. The catalysed reaction is dCMP + ATP = dCDP + ADP. It carries out the reaction a 2'-deoxyribonucleoside 5'-diphosphate + ATP = a 2'-deoxyribonucleoside 5'-triphosphate + ADP. It catalyses the reaction a ribonucleoside 5'-diphosphate + ATP = a ribonucleoside 5'-triphosphate + ADP. The enzyme catalyses GDP + ATP = GTP + ADP. The catalysed reaction is CDP + GTP = CTP + GDP. It carries out the reaction CDP + ATP = CTP + ADP. It catalyses the reaction UDP + ATP = UTP + ADP. The enzyme catalyses GTP + UDP = UTP + GDP. The catalysed reaction is dADP + GTP = dATP + GDP. It carries out the reaction dCDP + GTP = dCTP + GDP. It catalyses the reaction dCDP + ATP = dCTP + ADP. The enzyme catalyses dGDP + ATP = dGTP + ADP. The catalysed reaction is dTDP + GTP = dTTP + GDP. It carries out the reaction dTDP + ATP = dTTP + ADP. Broad-specificity mitochondrial nucleoside phosphate kinase involved in cellular nucleotide homeostasis by catalyzing nucleoside-phosphate interconversions. Similar to other adenylate kinases, preferentially catalyzes the phosphorylation of the nucleoside monophosphate AMP with ATP as phosphate donor to produce ADP. Phosphorylates only AMP when using GTP as phosphate donor. In vitro, can also catalyze the phosphorylation of CMP, dAMP and dCMP and use GTP as an alternate phosphate donor. Moreover, exhibits a diphosphate kinase activity, producing ATP, CTP, GTP, UTP, TTP, dATP, dCTP and dGTP from the corresponding diphosphate substrates with either ATP or GTP as phosphate donors. Plays a role in controlling cellular ATP levels by regulating phosphorylation and activation of the energy sensor protein kinase AMPK. Plays a protective role in the cellular response to oxidative stress. The polypeptide is Adenylate kinase 4, mitochondrial (Mus musculus (Mouse)).